A 129-amino-acid polypeptide reads, in one-letter code: Large ribosomal subunit protein bL21 (129 aa).

Belongs to the bacterial ribosomal protein bL21 family. In terms of assembly, part of the 50S ribosomal subunit. Contacts protein L20.

This protein binds to 23S rRNA in the presence of protein L20. This Microcystis aeruginosa (strain NIES-843 / IAM M-2473) protein is Large ribosomal subunit protein bL21.